A 227-amino-acid chain; its full sequence is UPF0173 metal-dependent hydrolase SSO0099 (227 aa).

The protein belongs to the UPF0173 family.

The sequence is that of UPF0173 metal-dependent hydrolase SSO0099 from Saccharolobus solfataricus (strain ATCC 35092 / DSM 1617 / JCM 11322 / P2) (Sulfolobus solfataricus).